The chain runs to 90 residues: Alpha-latrotoxin associated low molecular weight protein (90 aa).

A signal peptide spans M1–A18.

Belongs to the arthropod CHH/MIH/GIH/VIH hormone family. As to expression, expressed by the venom gland.

The protein resides in the secreted. Its function is as follows. May increase the toxicity of alpha-latrotoxin and/or other venom components. Is non-toxic to mice and to the cockroach Periplaneta americana. The chain is Alpha-latrotoxin associated low molecular weight protein from Latrodectus geometricus (Brown widow spider).